We begin with the raw amino-acid sequence, 447 residues long: Tektin-4 (447 aa).

2 coiled-coil regions span residues 69 to 144 and 304 to 423; these read ADRD…ALDA and FGRR…TNSL. Over residues 72–81 the composition is skewed to basic and acidic residues; the sequence is DQSERQRHES. Residues 72–104 are disordered; the sequence is DQSERQRHESQQLAAETEALAQRTQQDSTRKVG. The span at 82–97 shows a compositional bias: low complexity; the sequence is QQLAAETEALAQRTQQ.

This sequence belongs to the tektin family. As to quaternary structure, microtubule inner protein component of sperm flagellar doublet microtubules. Ubiquitinated, leading to its degradation. Deubiquitinated by USP16, promoting its stability. As to expression, expressed in trachea multiciliated cells.

The protein localises to the cytoplasm. It localises to the cytoskeleton. Its subcellular location is the cilium axoneme. It is found in the flagellum axoneme. In terms of biological role, microtubule inner protein (MIP) part of the dynein-decorated doublet microtubules (DMTs) in cilia and flagellar axoneme. Forms filamentous polymers in the walls of ciliary and flagellar microtubules. Contributes to normal sperm motility. This chain is Tektin-4 (TEKT4), found in Bos taurus (Bovine).